A 223-amino-acid polypeptide reads, in one-letter code: Protein-lysine N-methyltransferase CG9154 (223 aa).

Belongs to the class I-like SAM-binding methyltransferase superfamily. EFM5 family.

The protein localises to the cytoplasm. In terms of biological role, S-adenosyl-L-methionine-dependent protein-lysine N-methyltransferase that methylates elongation factor 1-alpha. The protein is Protein-lysine N-methyltransferase CG9154 of Drosophila melanogaster (Fruit fly).